The primary structure comprises 235 residues: Fibrillarin-like rRNA/tRNA 2'-O-methyltransferase (235 aa).

Residues T91–T92, E110–F111, D137–A138, and D157–Q160 contribute to the S-adenosyl-L-methionine site.

Belongs to the methyltransferase superfamily. Fibrillarin family. Interacts with nop5. Component of box C/D small ribonucleoprotein (sRNP) particles that contain rpl7ae, FlpA and nop5, plus a guide RNA.

Functionally, involved in pre-rRNA and tRNA processing. Utilizes the methyl donor S-adenosyl-L-methionine to catalyze the site-specific 2'-hydroxyl methylation of ribose moieties in rRNA and tRNA. Site specificity is provided by a guide RNA that base pairs with the substrate. Methylation occurs at a characteristic distance from the sequence involved in base pairing with the guide RNA. The protein is Fibrillarin-like rRNA/tRNA 2'-O-methyltransferase of Pyrobaculum islandicum (strain DSM 4184 / JCM 9189 / GEO3).